The primary structure comprises 218 residues: Outer-membrane lipoprotein LolB (218 aa).

Positions 1-20 are cleaved as a signal peptide; the sequence is MSQVIRTLALTGLALAGLSG. Residue Cys21 is the site of N-palmitoyl cysteine attachment. A lipid anchor (S-diacylglycerol cysteine) is attached at Cys21.

It belongs to the LolB family. In terms of assembly, monomer.

Its subcellular location is the cell outer membrane. Plays a critical role in the incorporation of lipoproteins in the outer membrane after they are released by the LolA protein. The chain is Outer-membrane lipoprotein LolB from Xanthomonas campestris pv. campestris (strain B100).